The chain runs to 834 residues: Protein SEY1 (834 aa).

The interval 1–26 (MSNVPSPTVTLEGDSPDAAHEAVSSS) is disordered. Residues 1-733 (MSNVPSPTVT…KRSIMQHVTQ (733 aa)) lie on the Cytoplasmic side of the membrane. The 234-residue stretch at 63 to 296 (PGDYRIISVF…SESFLFKPNY (234 aa)) folds into the GB1/RHD3-type G domain. 73-80 (GSQSTGKS) lines the GTP pocket. Residues 659 to 688 (VRDKKLKRQYETVREEKEAEEEDEDEWDSE) are a coiled coil. Residues 670 to 689 (TVREEKEAEEEDEDEWDSED) form a disordered region. Residues 676-689 (EAEEEDEDEWDSED) are compositionally biased toward acidic residues. A helical transmembrane segment spans residues 734-754 (IPYYIYIVILVLGWNEFMAIL). At 755–757 (RNP) the chain is on the lumenal side. The chain crosses the membrane as a helical span at residues 758-778 (FFFTLLIMLAGATYVMYSMNL). The Cytoplasmic segment spans residues 779-834 (LGPASIVVQRMANEALGLAKEKLREFVVDDHMQHGHNMKKMTTNDIELDDLSEEST).

This sequence belongs to the TRAFAC class dynamin-like GTPase superfamily. GB1/RHD3 GTPase family. RHD3 subfamily.

It localises to the endoplasmic reticulum membrane. Cooperates with the reticulon proteins and tubule-shaping DP1 family proteins to generate and maintain the structure of the tubular endoplasmic reticulum network. Has GTPase activity, which is required for its function in ER organization. This Clavispora lusitaniae (strain ATCC 42720) (Yeast) protein is Protein SEY1.